The sequence spans 521 residues: Bifunctional dihydrofolate reductase-thymidylate synthase (521 aa).

One can recognise a DHFR domain in the interval 22-232; the sequence is AFSLVVAVDE…TKYYFEKLIP (211 aa). Valine 26 contributes to the substrate binding site. NADP(+)-binding positions include alanine 28 and 34–40; that span reads GIGDGRS. Aspartate 48 lines the substrate pocket. Residues 78-80 and 99-102 each bind NADP(+); these read RKT and LSST. Substrate is bound by residues isoleucine 154, tyrosine 160, and threonine 178. 155-162 contributes to the NADP(+) binding site; the sequence is GGGSVYAE. A thymidylate synthase region spans residues 237–521; it reads EEQYLSLVDR…YPPISMKMAV (285 aa). Arginine 257 is a dUMP binding site. The active site involves cysteine 403. Residues histidine 404, 422–426, asparagine 434, and 464–466 contribute to the dUMP site; these read QRSCD and HVY.

In the N-terminal section; belongs to the dihydrofolate reductase family. This sequence in the C-terminal section; belongs to the thymidylate synthase family. As to quaternary structure, homodimer.

It catalyses the reaction (6S)-5,6,7,8-tetrahydrofolate + NADP(+) = 7,8-dihydrofolate + NADPH + H(+). The catalysed reaction is dUMP + (6R)-5,10-methylene-5,6,7,8-tetrahydrofolate = 7,8-dihydrofolate + dTMP. It participates in cofactor biosynthesis; tetrahydrofolate biosynthesis; 5,6,7,8-tetrahydrofolate from 7,8-dihydrofolate: step 1/1. Its function is as follows. Bifunctional enzyme. Involved in de novo dTMP biosynthesis. Key enzyme in folate metabolism. Catalyzes an essential reaction for de novo glycine and purine synthesis, DNA precursor synthesis, and for the conversion of dUMP to dTMP. This Trypanosoma cruzi protein is Bifunctional dihydrofolate reductase-thymidylate synthase.